Consider the following 444-residue polypeptide: Xylose isomerase (444 aa).

Active-site residues include His-101 and Asp-104. Mg(2+) is bound by residues Glu-232, Glu-268, His-271, Asp-296, Asp-307, Asp-309, and Asp-339.

Belongs to the xylose isomerase family. Homotetramer. Mg(2+) serves as cofactor.

It localises to the cytoplasm. The enzyme catalyses alpha-D-xylose = alpha-D-xylulofuranose. This chain is Xylose isomerase, found in Thermotoga sp. (strain RQ2).